A 311-amino-acid chain; its full sequence is Dihydroorotate dehydrogenase B (NAD(+)), catalytic subunit (311 aa).

FMN-binding positions include serine 24 and 48-49 (KA). Substrate is bound by residues lysine 48 and 72–76 (NAIGL). FMN-binding residues include asparagine 104 and asparagine 132. Asparagine 132 contacts substrate. Cysteine 135 serves as the catalytic Nucleophile. FMN-binding residues include lysine 170 and isoleucine 196. Residue 197–198 (NT) participates in substrate binding. FMN is bound by residues glycine 222, 248 to 249 (GG), and 270 to 271 (GT).

This sequence belongs to the dihydroorotate dehydrogenase family. Type 1 subfamily. Heterotetramer of 2 PyrK and 2 PyrD type B subunits. It depends on FMN as a cofactor.

The protein localises to the cytoplasm. It carries out the reaction (S)-dihydroorotate + NAD(+) = orotate + NADH + H(+). Its pathway is pyrimidine metabolism; UMP biosynthesis via de novo pathway; orotate from (S)-dihydroorotate (NAD(+) route): step 1/1. In terms of biological role, catalyzes the conversion of dihydroorotate to orotate with NAD(+) as electron acceptor. This is Dihydroorotate dehydrogenase B (NAD(+)), catalytic subunit (pyrDB) from Lactococcus lactis subsp. lactis (strain IL1403) (Streptococcus lactis).